Here is a 115-residue protein sequence, read N- to C-terminus: Large ribosomal subunit protein bL20c (115 aa).

The protein belongs to the bacterial ribosomal protein bL20 family.

It is found in the plastid. It localises to the organellar chromatophore. In terms of biological role, binds directly to 23S ribosomal RNA and is necessary for the in vitro assembly process of the 50S ribosomal subunit. It is not involved in the protein synthesizing functions of that subunit. This chain is Large ribosomal subunit protein bL20c, found in Paulinella chromatophora.